We begin with the raw amino-acid sequence, 89 residues long: Cell division topological specificity factor (89 aa).

It belongs to the MinE family.

Prevents the cell division inhibition by proteins MinC and MinD at internal division sites while permitting inhibition at polar sites. This ensures cell division at the proper site by restricting the formation of a division septum at the midpoint of the long axis of the cell. The protein is Cell division topological specificity factor of Pectobacterium carotovorum subsp. carotovorum (strain PC1).